The chain runs to 314 residues: Olfactory receptor 5F1 (314 aa).

Topologically, residues 1 to 25 (MTRKNYTSLTEFVLLGLADTLELQI) are extracellular. A glycan (N-linked (GlcNAc...) asparagine) is linked at Asn5. Residues 26–46 (ILFLFFLVIYTLTVLGNLGMI) traverse the membrane as a helical segment. Residues 47–54 (LLIRIDSQ) lie on the Cytoplasmic side of the membrane. The chain crosses the membrane as a helical span at residues 55–75 (LHTPMYFFLANLSFVDVCNST). The Extracellular portion of the chain corresponds to 76 to 99 (TITPKMLADLLSEKKTISFAGCFL). Cys97 and Cys189 are disulfide-bonded. The helical transmembrane segment at 100-120 (QMYFFISLATTECILFGLMAY) threads the bilayer. Residues 121–139 (DRYAAICRPLLYSLIMSRT) lie on the Cytoplasmic side of the membrane. A helical membrane pass occupies residues 140–160 (VYLKMAAGAFAAGLLNFMVNT). At 161-196 (SHVSSLSFCDSNVIHHFFCDSPPLFKLSCSDTILKE) the chain is on the extracellular side. A helical transmembrane segment spans residues 197–217 (SISSILAGVNIVGTLLVILSS). Residues 218-237 (YSYVLFSIFSMHSGEGRHRA) are Cytoplasmic-facing. Residues 238–258 (FSTCASHLTAIILFYATCIYT) form a helical membrane-spanning segment. The Extracellular segment spans residues 259-271 (YLRPSSSYSLNQD). A helical transmembrane segment spans residues 272-292 (KVASVFYTVVIPMLNPLIYSL). At 293-314 (RSKEVKKALANVISRKRTSSFL) the chain is on the cytoplasmic side.

Belongs to the G-protein coupled receptor 1 family.

Its subcellular location is the cell membrane. Functionally, odorant receptor. This Homo sapiens (Human) protein is Olfactory receptor 5F1 (OR5F1).